A 353-amino-acid polypeptide reads, in one-letter code: Cytochrome c biogenesis protein CcsA (353 aa).

8 consecutive transmembrane segments (helical) span residues 15 to 35, 37 to 57, 68 to 88, 97 to 117, 142 to 162, 261 to 281, 288 to 308, and 322 to 342; these read FAIL…PNLP, LAAL…TLLG, LSNL…VHLI, LVGV…TMTL, VMML…AFLI, IIGL…VWAN, WSWD…AAYL, and AILA…VNLL.

This sequence belongs to the CcmF/CycK/Ccl1/NrfE/CcsA family. As to quaternary structure, may interact with ccs1.

Its subcellular location is the cellular thylakoid membrane. Required during biogenesis of c-type cytochromes (cytochrome c6 and cytochrome f) at the step of heme attachment. The sequence is that of Cytochrome c biogenesis protein CcsA from Nostoc punctiforme (strain ATCC 29133 / PCC 73102).